Consider the following 107-residue polypeptide: Nucleoid-associated protein BLi00029/BL02358 (107 aa).

The segment at methionine 1–glutamate 27 is disordered. Positions methionine 8–lysine 17 are enriched in low complexity. Positions methionine 18 to glutamate 27 are enriched in basic and acidic residues.

This sequence belongs to the YbaB/EbfC family. In terms of assembly, homodimer.

It localises to the cytoplasm. Its subcellular location is the nucleoid. In terms of biological role, binds to DNA and alters its conformation. May be involved in regulation of gene expression, nucleoid organization and DNA protection. This is Nucleoid-associated protein BLi00029/BL02358 from Bacillus licheniformis (strain ATCC 14580 / DSM 13 / JCM 2505 / CCUG 7422 / NBRC 12200 / NCIMB 9375 / NCTC 10341 / NRRL NRS-1264 / Gibson 46).